The primary structure comprises 161 residues: Large ribosomal subunit protein uL10 (161 aa).

This sequence belongs to the universal ribosomal protein uL10 family. As to quaternary structure, part of the ribosomal stalk of the 50S ribosomal subunit. The N-terminus interacts with L11 and the large rRNA to form the base of the stalk. The C-terminus forms an elongated spine to which L12 dimers bind in a sequential fashion forming a multimeric L10(L12)X complex.

Its function is as follows. Forms part of the ribosomal stalk, playing a central role in the interaction of the ribosome with GTP-bound translation factors. The protein is Large ribosomal subunit protein uL10 of Campylobacter curvus (strain 525.92).